The primary structure comprises 84 residues: Toxin Tst1 (84 aa).

The signal sequence occupies residues 1 to 19 (MKGMILFISCLLLIDIVVG). The LCN-type CS-alpha/beta domain occupies 21 to 82 (KEGYLMDHEG…VWDRATNKCG (62 aa)). Intrachain disulfides connect Cys31–Cys81, Cys35–Cys57, Cys43–Cys62, and Cys47–Cys64. At Cys81 the chain carries Cysteine amide.

In terms of tissue distribution, expressed by the venom gland.

It is found in the secreted. Beta toxins bind voltage-independently at site-4 of sodium channels (Nav) and shift the voltage of activation toward more negative potentials thereby affecting sodium channel activation and promoting spontaneous and repetitive firing. This toxin is active only on mammals. Is toxic to mice. This Tityus stigmurus (Brazilian scorpion) protein is Toxin Tst1.